A 522-amino-acid polypeptide reads, in one-letter code: Sugar transport protein 1 (522 aa).

Topologically, residues 1–22 (MPAGGFVVGDGQKAYPGKLTPF) are cytoplasmic. The chain crosses the membrane as a helical span at residues 23 to 43 (VLFTCVVAAMGGLIFGYDIGI). At 44–79 (SGGVTSMPSFLKRFFPSVYRKQQEDASTNQYCQYDS) the chain is on the extracellular side. A helical membrane pass occupies residues 80–100 (PTLTMFTSSLYLAALISSLVA). The Cytoplasmic segment spans residues 101–117 (STVTRKFGRRLSMLFGG). Residues 118 to 138 (ILFCAGALINGFAKHVWMLIV) traverse the membrane as a helical segment. The Extracellular portion of the chain corresponds to 139-140 (GR). The chain crosses the membrane as a helical span at residues 141-161 (ILLGFGIGFANQAVPLYLSEM). Over 162–171 (APYKYRGALN) the chain is Cytoplasmic. Residues 172-192 (IGFQLSITIGILVAEVLNYFF) traverse the membrane as a helical segment. Over 193 to 202 (AKIKGGWGWR) the chain is Extracellular. Residues 203 to 223 (LSLGGAVVPALIITIGSLVLP) form a helical membrane-spanning segment. The Cytoplasmic portion of the chain corresponds to 224 to 289 (DTPNSMIERG…YRPHLTMAVM (66 aa)). A Phosphoserine modification is found at S252. A helical membrane pass occupies residues 290 to 310 (IPFFQQLTGINVIMFYAPVLF). At 311–321 (NTIGFTTDASL) the chain is on the extracellular side. A helical transmembrane segment spans residues 322–342 (MSAVVTGSVNVAATLVSIYGV). Residues 343–348 (DRWGRR) lie on the Cytoplasmic side of the membrane. The helical transmembrane segment at 349-369 (FLFLEGGTQMLICQAVVAACI) threads the bilayer. Over 370 to 384 (GAKFGVDGTPGELPK) the chain is Extracellular. Residues 385-405 (WYAIVVVTFICIYVAGFAWSW) form a helical membrane-spanning segment. Over 406–427 (GPLGWLVPSEIFPLEIRSAAQS) the chain is Cytoplasmic. Residues 428-448 (ITVSVNMIFTFIIAQIFLTML) form a helical membrane-spanning segment. At 449-452 (CHLK) the chain is on the extracellular side. Residues 453–473 (FGLFLVFAFFVVVMSIFVYIF) traverse the membrane as a helical segment. The Cytoplasmic segment spans residues 474 to 522 (LPETKGIPIEEMGQVWRSHWYWSRFVEDGEYGNALEMGKNSNQAGTKHV).

It belongs to the major facilitator superfamily. Sugar transporter (TC 2.A.1.1) family. As to expression, mostly expressed in young leaves, especially in guard cells (at protein level). Also present in roots.

It localises to the cell membrane. In terms of biological role, major hexose transporter. Mediates an active uptake of hexoses, by sugar/hydrogen symport. Can transport glucose, 3-O-methylglucose, fructose, xylose, mannose, galactose, fucose, 2-deoxyglucose and arabinose. Confers sensitivity to galactose in seedlings. The protein is Sugar transport protein 1 (STP1) of Arabidopsis thaliana (Mouse-ear cress).